The primary structure comprises 205 residues: Glycerol-3-phosphate acyltransferase (205 aa).

A run of 5 helical transmembrane segments spans residues 3–23, 53–73, 80–100, 112–132, and 138–158; these read VFAL…SAIL, GVAA…VWLA, PFYL…PVFF, LGAI…TWLL, and GYSS…VWWF.

The protein belongs to the PlsY family. Probably interacts with PlsX.

It localises to the cell inner membrane. The catalysed reaction is an acyl phosphate + sn-glycerol 3-phosphate = a 1-acyl-sn-glycero-3-phosphate + phosphate. Its pathway is lipid metabolism; phospholipid metabolism. Catalyzes the transfer of an acyl group from acyl-phosphate (acyl-PO(4)) to glycerol-3-phosphate (G3P) to form lysophosphatidic acid (LPA). This enzyme utilizes acyl-phosphate as fatty acyl donor, but not acyl-CoA or acyl-ACP. The polypeptide is Glycerol-3-phosphate acyltransferase (Erwinia tasmaniensis (strain DSM 17950 / CFBP 7177 / CIP 109463 / NCPPB 4357 / Et1/99)).